Reading from the N-terminus, the 358-residue chain is Methylthioribose-1-phosphate isomerase (358 aa).

Substrate-binding positions include 54-56 (RGA), R96, and Q205. Residue D246 is the Proton donor of the active site. A substrate-binding site is contributed by 256 to 257 (NK).

Belongs to the eIF-2B alpha/beta/delta subunits family. MtnA subfamily.

It carries out the reaction 5-(methylsulfanyl)-alpha-D-ribose 1-phosphate = 5-(methylsulfanyl)-D-ribulose 1-phosphate. It participates in amino-acid biosynthesis; L-methionine biosynthesis via salvage pathway; L-methionine from S-methyl-5-thio-alpha-D-ribose 1-phosphate: step 1/6. Functionally, catalyzes the interconversion of methylthioribose-1-phosphate (MTR-1-P) into methylthioribulose-1-phosphate (MTRu-1-P). The chain is Methylthioribose-1-phosphate isomerase from Stutzerimonas stutzeri (strain A1501) (Pseudomonas stutzeri).